The chain runs to 142 residues: MRHYETMFILKPTLVEEEIKSKIEFYKEVITKHHGVIETSLDMGMRNLAYEIKKHKRGYYYVAYFKAEPSMILELERLYRINEDVLRFIVIKYESKKEVEAWHALVDRANKKPSHAKEKHEKTEHAHSHHAEEAKSTESHSE.

Residues 110 to 142 (NKKPSHAKEKHEKTEHAHSHHAEEAKSTESHSE) form a disordered region.

It belongs to the bacterial ribosomal protein bS6 family.

In terms of biological role, binds together with bS18 to 16S ribosomal RNA. The chain is Small ribosomal subunit protein bS6 from Helicobacter pylori (strain G27).